Reading from the N-terminus, the 368-residue chain is Alcohol dehydrogenase 6 (368 aa).

Residue serine 23 is modified to Phosphoserine. Zn(2+) is bound by residues cysteine 47, histidine 69, cysteine 99, cysteine 102, cysteine 105, cysteine 113, and cysteine 175. NAD(+)-binding positions include 200-205 (GLGGVG), aspartate 224, lysine 229, and 293-295 (VGV).

Belongs to the zinc-containing alcohol dehydrogenase family. Class-V subfamily. In terms of assembly, dimer. The cofactor is Zn(2+). Stomach and liver.

Its subcellular location is the cytoplasm. It carries out the reaction a primary alcohol + NAD(+) = an aldehyde + NADH + H(+). The catalysed reaction is a secondary alcohol + NAD(+) = a ketone + NADH + H(+). Its activity is regulated as follows. Inhibited partially by pyrazole (10 mM) in the reaction mixture containing 100 mM ethanol at pH 10.0. Functionally, alcohol dehydrogenase. Catalyzes the NAD-dependent oxidation of primary alcohols to the corresponding aldehydes. Oxidizes secondary alcohols to the corresponding ketones. The polypeptide is Alcohol dehydrogenase 6 (ADH6) (Homo sapiens (Human)).